The sequence spans 289 residues: Eukaryotic translation initiation factor 3 subunit G (289 aa).

The segment at 1 to 33 (MSRPTKADWADDEEFDDPSALPPQQITTNKDGT) is disordered. The RRM domain occupies 209-287 (ATLRVTNVSE…LILRVEFAKR (79 aa)).

The protein belongs to the eIF-3 subunit G family. In terms of assembly, component of the eukaryotic translation initiation factor 3 (eIF-3) complex.

It localises to the cytoplasm. In terms of biological role, RNA-binding component of the eukaryotic translation initiation factor 3 (eIF-3) complex, which is involved in protein synthesis of a specialized repertoire of mRNAs and, together with other initiation factors, stimulates binding of mRNA and methionyl-tRNAi to the 40S ribosome. The eIF-3 complex specifically targets and initiates translation of a subset of mRNAs involved in cell proliferation. This subunit can bind 18S rRNA. The protein is Eukaryotic translation initiation factor 3 subunit G (tif35) of Emericella nidulans (strain FGSC A4 / ATCC 38163 / CBS 112.46 / NRRL 194 / M139) (Aspergillus nidulans).